The chain runs to 722 residues: Glycine--tRNA ligase beta subunit (722 aa).

The protein belongs to the class-II aminoacyl-tRNA synthetase family. In terms of assembly, tetramer of two alpha and two beta subunits.

The protein resides in the cytoplasm. It carries out the reaction tRNA(Gly) + glycine + ATP = glycyl-tRNA(Gly) + AMP + diphosphate. The protein is Glycine--tRNA ligase beta subunit of Haemophilus influenzae (strain 86-028NP).